The following is a 443-amino-acid chain: D(2) dopamine receptor (443 aa).

The Extracellular segment spans residues 1-37; that stretch reads MDPLNLSWYDDDLESQNWSRPFNGSEGKPGKPHYNYY. N-linked (GlcNAc...) asparagine glycosylation is found at N5, N17, and N23. A helical transmembrane segment spans residues 38 to 60; sequence AMLLTLLIFIIVFGNVLVCMAVS. The Cytoplasmic portion of the chain corresponds to 61-70; sequence REKALQTTTN. Residues 71–93 traverse the membrane as a helical segment; the sequence is YLIVSLAVADLLVATLVMPWVVY. Residues 94-108 lie on the Extracellular side of the membrane; the sequence is LEVVGEWKFSRIHCD. An intrachain disulfide couples C107 to C182. Residues 109–130 form a helical membrane-spanning segment; sequence IFVTLDVMMCTASILNLCAISI. Topologically, residues 131-151 are cytoplasmic; it reads DRYTAVAMPMLYNTRYSSKRR. The helical transmembrane segment at 152–172 threads the bilayer; sequence VTVMIAIVWVLSFTISCPLLF. Residues 173–188 lie on the Extracellular side of the membrane; that stretch reads GLNNTDQNECIIANPA. A helical transmembrane segment spans residues 189 to 213; sequence FVVYSSIVSFYVPFIVTLLVYIKIY. The tract at residues 211-373 is interaction with PPP1R9B; sequence KIYIVLRRRR…SQQKEKKATQ (163 aa). The Cytoplasmic portion of the chain corresponds to 214–373; it reads IVLRRRRKRV…SQQKEKKATQ (160 aa). Residues 282–332 form a disordered region; sequence EMLSSTSPPERTRYSPIPPSHHQLTLPDPSHHGLHSTADSPAKPEKNGHAK. Residues 323-332 are compositionally biased toward basic and acidic residues; sequence AKPEKNGHAK. A helical transmembrane segment spans residues 374 to 395; it reads MLAIVLGVFIICWLPFFITHIL. The Extracellular segment spans residues 396–409; the sequence is NIHCECNIPPVLYS. A disulfide bond links C399 and C401. Residues 410–431 form a helical membrane-spanning segment; that stretch reads AFTWLGYVNSAVNPIIYTTFNI. Topologically, residues 432 to 443 are cytoplasmic; that stretch reads EFRKAFLKILHC. C443 carries the S-palmitoyl cysteine lipid modification.

This sequence belongs to the G-protein coupled receptor 1 family. Forms homo- and heterooligomers with DRD4. The interaction with DRD4 may modulate agonist-induced downstream signaling. Interacts with CADPS and CADPS2. Interacts with GPRASP1, PPP1R9B and CLIC6. Interacts with ARRB2. Interacts with HTR2A. Interacts with DRD1. Interacts with KCNA2. Post-translationally, palmitoylated. Palmitoylation which is required for proper localization to the plasma membrane and stability of the receptor could be carried on by ZDHHC4, ZDHHC3 and ZDHHC8.

The protein localises to the cell membrane. Its subcellular location is the golgi apparatus membrane. In terms of biological role, dopamine receptor whose activity is mediated by G proteins which inhibit adenylyl cyclase. Positively regulates postnatal regression of retinal hyaloid vessels via suppression of VEGFR2/KDR activity, downstream of OPN5. The protein is D(2) dopamine receptor (DRD2) of Canis lupus familiaris (Dog).